The following is a 237-amino-acid chain: Orotidine 5'-phosphate decarboxylase (237 aa).

Substrate contacts are provided by residues aspartate 17, lysine 39, 66-75, threonine 121, arginine 182, glutamine 191, glycine 211, and arginine 212; that span reads DLKLHDIGNT. The Proton donor role is filled by lysine 68.

Belongs to the OMP decarboxylase family. Type 1 subfamily. As to quaternary structure, homodimer.

It catalyses the reaction orotidine 5'-phosphate + H(+) = UMP + CO2. It participates in pyrimidine metabolism; UMP biosynthesis via de novo pathway; UMP from orotate: step 2/2. Catalyzes the decarboxylation of orotidine 5'-monophosphate (OMP) to uridine 5'-monophosphate (UMP). This is Orotidine 5'-phosphate decarboxylase from Rhodopseudomonas palustris (strain TIE-1).